The primary structure comprises 127 residues: MGKPATPRALPENEAKAVARMLRVSPQKLNLVAALIRGKKVDTALADLEFSRKRIARDVKKCLESAIANAENNHDLDVDDLVVSQAFVGKALVLKRFHARARGRGARILKPFSNLTIVVREVRAEAA.

It belongs to the universal ribosomal protein uL22 family. As to quaternary structure, part of the 50S ribosomal subunit.

Its function is as follows. This protein binds specifically to 23S rRNA; its binding is stimulated by other ribosomal proteins, e.g. L4, L17, and L20. It is important during the early stages of 50S assembly. It makes multiple contacts with different domains of the 23S rRNA in the assembled 50S subunit and ribosome. Functionally, the globular domain of the protein is located near the polypeptide exit tunnel on the outside of the subunit, while an extended beta-hairpin is found that lines the wall of the exit tunnel in the center of the 70S ribosome. This chain is Large ribosomal subunit protein uL22, found in Methylorubrum populi (strain ATCC BAA-705 / NCIMB 13946 / BJ001) (Methylobacterium populi).